Consider the following 654-residue polypeptide: Protein fem-1 homolog A (654 aa).

ANK repeat units lie at residues 2–31 (DLHT…REEI), 40–70 (GGGT…SVEA), 82–111 (EGAP…SVNR), 115–145 (TNST…DLEV), 149–178 (HGHT…QVNR), 182–211 (KGNT…RMER), and 214–243 (YGMT…GHGQ). At Ser108 the chain carries Phosphoserine. Residues 241 to 265 (HGQLSGTELPGEGSSQMAGNHCSTP) are disordered. Over residues 253–263 (GSSQMAGNHCS) the composition is skewed to polar residues. TPR repeat units follow at residues 283–317 (VEAL…RHQG) and 375–408 (SYYI…QQNN). 2 ANK repeats span residues 519-561 (NGFT…DPDS) and 565-594 (DNNT…HMDA). At Ser608 the chain carries Phosphoserine.

The protein belongs to the fem-1 family. As to quaternary structure, component of a CRL2 E3 ubiquitin-protein ligase complex, also named ECS (Elongin BC-CUL2/5-SOCS-box protein) complex, composed of CUL2, Elongin BC (ELOB and ELOC), RBX1 and substrate-specific adapter FEM1A. Interacts with PTGER4. Interacts with NFKB1; the interaction is direct. In terms of processing, phosphorylated; highly phosphorylated in myoblasts and myotubes. Phosphorylation at Ser-108 and Ser-608 promote PGE2-EP4-mediated inhibition of inflammation. Dephosphorylated by protein phosphatase 2A (PP2A).

The protein resides in the mitochondrion. It localises to the cytoplasm. It functions in the pathway protein modification; protein ubiquitination. Substrate-recognition component of a Cul2-RING (CRL2) E3 ubiquitin-protein ligase complex of the DesCEND (destruction via C-end degrons) pathway, which recognizes a C-degron located at the extreme C terminus of target proteins, leading to their ubiquitination and degradation. The C-degron recognized by the DesCEND pathway is usually a motif of less than ten residues and can be present in full-length proteins, truncated proteins or proteolytically cleaved forms. The CRL2(FEM1A) complex specifically recognizes proteins with an arginine at the C-terminus: recognizes and binds proteins ending with -Lys/Arg-Xaa-Arg and -Lys/Arg-Xaa-Xaa-Arg C-degrons, such as SIL1 or OR51B2, leading to their ubiquitination and degradation. Involved in PGE2-EP4-mediated inhibition of inflammation of macrophages via interaction with NFKB1 and PTGER4. Promotes inflammation in brain microglia through MAP2K4/MKK4-mediated signaling. This is Protein fem-1 homolog A from Rattus norvegicus (Rat).